Consider the following 709-residue polypeptide: Alpha-1,2-mannosyltransferase MNN24 (709 aa).

Residues 1-9 lie on the Cytoplasmic side of the membrane; it reads MFSIPVSSK. A helical membrane pass occupies residues 10-30; that stretch reads TVRLILVSLLLITLINILAAF. Residues 31–709 are Extracellular-facing; sequence QRSTLSSWFP…KNHIEFLEIS (679 aa). Asn317 is a glycosylation site (N-linked (GlcNAc...) asparagine).

It belongs to the MNN1/MNT family.

The protein localises to the golgi apparatus membrane. It functions in the pathway protein modification; protein glycosylation. In terms of biological role, alpha-1,2-mannosyltransferase required for cell wall integrity. Responsible for addition of the first alpha-1,2-linked mannose to form the branches on the mannan backbone of oligosaccharides. Addition of alpha-1,2-mannose is required for stabilization of the alpha-1,6-mannose backbone and hence regulates mannan fibril length; and is important for both immune recognition and virulence. The sequence is that of Alpha-1,2-mannosyltransferase MNN24 (MNN24) from Candida albicans (strain SC5314 / ATCC MYA-2876) (Yeast).